Here is a 71-residue protein sequence, read N- to C-terminus: Ubiquinol-cytochrome c reductase complex assembly factor 6 (71 aa).

The Mitochondrial matrix segment spans residues 1–8 (MPAGVPMS). The helical; Signal-anchor for type II membrane protein transmembrane segment at 9–25 (TYLKMLAASLLAMCAGA) threads the bilayer. The Mitochondrial intermembrane portion of the chain corresponds to 26–71 (EVVHRYYRPDLTIPEIPPKRGELKTELLGLKERKHKPQISQQEELK). A disordered region spans residues 52–71 (LLGLKERKHKPQISQQEELK).

It belongs to the UQCC6 family. In terms of assembly, interacts with UQCRC1. Interacts with UQCRQ. Interacts with UQCC5. Forms a complex, named COMB/coordinator of mitochondrial CYTB biogenesis, composed of UQCC1, UQCC2, UQCC4, UQCC5 and UQCC6; stabilizes nascent cytochrome b/MT-CYB and promotes its membrane insertion. Forms a complex, named COMA, composed of UQCC1, UQCC2 and UQCC4; activates MT-CYB translation. Forms a complex, named COMC, composed of UQCC1, UQCC2; UQCC3 and UQCC4; mediates MT-CYB hemylation and association with the first nuclear-encoded complex III subunit UQCRQ. Interacts with MT-CYB.

It localises to the mitochondrion inner membrane. Required for the assembly and stability of the mitochondrial ubiquinol-cytochrome c reductase complex (complex III (CIII) or cytochrome b-c1 complex), a multisubunit transmembrane complex that is part of the mitochondrial electron transport chain (ETC) which drives oxidative phosphorylation. Mediates early complex III biogenesis. Participates in regulating the levels of electron transport chain proteins, and therefore energy supply, in response to changes in energy demand. Also required for cytochrome c oxidase complex (complex IV) assembly. This Pongo abelii (Sumatran orangutan) protein is Ubiquinol-cytochrome c reductase complex assembly factor 6.